We begin with the raw amino-acid sequence, 159 residues long: MSKANKKKKPQSSTIAQNKRARHDYFLETKFEAGVALLGWEVKALRAQRGQMTESYVLVQNGEAWLQGAQIQPLPQACTHYVTEPARPRKLLLNRRELNKIAEAKDQKGYTIVATSLYWKAHMVKCEIAIAKGKQLHDKRQTEKEREWNIQKQRVLYDK.

The protein belongs to the SmpB family.

Its subcellular location is the cytoplasm. Its function is as follows. Required for rescue of stalled ribosomes mediated by trans-translation. Binds to transfer-messenger RNA (tmRNA), required for stable association of tmRNA with ribosomes. tmRNA and SmpB together mimic tRNA shape, replacing the anticodon stem-loop with SmpB. tmRNA is encoded by the ssrA gene; the 2 termini fold to resemble tRNA(Ala) and it encodes a 'tag peptide', a short internal open reading frame. During trans-translation Ala-aminoacylated tmRNA acts like a tRNA, entering the A-site of stalled ribosomes, displacing the stalled mRNA. The ribosome then switches to translate the ORF on the tmRNA; the nascent peptide is terminated with the 'tag peptide' encoded by the tmRNA and targeted for degradation. The ribosome is freed to recommence translation, which seems to be the essential function of trans-translation. In Saccharophagus degradans (strain 2-40 / ATCC 43961 / DSM 17024), this protein is SsrA-binding protein.